A 308-amino-acid chain; its full sequence is Adult enhancer factor 1 (308 aa).

2 disordered regions span residues 50-94 (AHMA…PLPF) and 123-143 (QAAA…THLT). Over residues 56–76 (QQQQQQQQQQQQQHHQQQQQQ) the composition is skewed to low complexity. Residues 81–90 (PSVPPPPTEL) show a composition bias toward pro residues. 4 C2H2-type zinc fingers span residues 184 to 206 (FHCT…VKIH), 212 to 234 (YKCN…LKIH), 240 to 262 (YNCN…VKIH), and 268 to 290 (FECV…IKIH).

In terms of tissue distribution, found in all tissues examined including the ovary and the fat body.

The protein resides in the nucleus. Its function is as follows. Transcriptional repressor that binds specifically to fat body-specific enhancers, namely the adult ADH enhancer (AAE) and the enhancer that controls yolk protein gene expression. The sequence is that of Adult enhancer factor 1 (Aef1) from Drosophila melanogaster (Fruit fly).